Here is a 382-residue protein sequence, read N- to C-terminus: UDP-N-acetylglucosamine--N-acetylmuramyl-(pentapeptide) pyrophosphoryl-undecaprenol N-acetylglucosamine transferase (382 aa).

UDP-N-acetyl-alpha-D-glucosamine is bound by residues 22-24 (TGG), N134, R186, S212, 285-290 (ALTVAE), and Q311.

It belongs to the glycosyltransferase 28 family. MurG subfamily.

It localises to the cell inner membrane. The enzyme catalyses di-trans,octa-cis-undecaprenyl diphospho-N-acetyl-alpha-D-muramoyl-L-alanyl-D-glutamyl-meso-2,6-diaminopimeloyl-D-alanyl-D-alanine + UDP-N-acetyl-alpha-D-glucosamine = di-trans,octa-cis-undecaprenyl diphospho-[N-acetyl-alpha-D-glucosaminyl-(1-&gt;4)]-N-acetyl-alpha-D-muramoyl-L-alanyl-D-glutamyl-meso-2,6-diaminopimeloyl-D-alanyl-D-alanine + UDP + H(+). The protein operates within cell wall biogenesis; peptidoglycan biosynthesis. Its function is as follows. Cell wall formation. Catalyzes the transfer of a GlcNAc subunit on undecaprenyl-pyrophosphoryl-MurNAc-pentapeptide (lipid intermediate I) to form undecaprenyl-pyrophosphoryl-MurNAc-(pentapeptide)GlcNAc (lipid intermediate II). In Pseudoalteromonas atlantica (strain T6c / ATCC BAA-1087), this protein is UDP-N-acetylglucosamine--N-acetylmuramyl-(pentapeptide) pyrophosphoryl-undecaprenol N-acetylglucosamine transferase.